Reading from the N-terminus, the 457-residue chain is uncharacterized protein (457 aa).

The next 12 helical transmembrane spans lie at Val18 to Val38, Gly44 to Val64, Met101 to Ile121, Ile158 to Ile178, Leu188 to Gly208, Leu228 to Ile248, Ile273 to Pro293, Asn294 to Gly314, Phe316 to Ile336, Ala355 to Asp375, Ser396 to Leu416, and Ile433 to Ile453.

This sequence belongs to the sodium:neurotransmitter symporter (SNF) (TC 2.A.22) family.

The protein resides in the cell membrane. Its function is as follows. Putative sodium-dependent transporter. This is an uncharacterized protein from Haemophilus influenzae (strain ATCC 51907 / DSM 11121 / KW20 / Rd).